A 945-amino-acid chain; its full sequence is Poly [ADP-ribose] polymerase 1 (945 aa).

A PARP-type 1 zinc finger spans residues 10-96 (YAIEYAKSGR…KLRQEIQHFK (87 aa)). Positions 22, 25, 54, and 57 each coordinate Zn(2+). The PARP-type 2; degenerate zinc finger occupies 117-183 (IKTEKSLSNR…DYEENFKIKA (67 aa)). The disordered stretch occupies residues 195 to 251 (RRSTEPATPASASPTPPEAETPVLSAEGSPESSNKRPASSEIIEIDGEGNPDENDFA). Acidic residues predominate over residues 237-248 (IEIDGEGNPDEN). Residues 258–397 (KEARLMEVQK…NQMSERLYIG (140 aa)) form the PADR1 zinc-binding domain. The tract at residues 324–369 (GCPIICQTCSNGKIVYNSSCRTYVCTGYATEYSKCTYESKNPIRTP) is zinc ribbon. Residues cysteine 329, cysteine 332, cysteine 348, and cysteine 358 each coordinate Zn(2+). The region spanning 464–563 (RCHVFKNEID…KHFRKMPGMF (100 aa)) is the WGR domain. The PARP alpha-helical domain occupies 586 to 704 (KTLLPKSVKE…DIKFAYDQIS (119 aa)). The region spanning 717–945 (DPVDINYQKL…RVKMHHARHL (229 aa)) is the PARP catalytic domain.

This sequence belongs to the ARTD/PARP family.

The protein localises to the nucleus. The catalysed reaction is NAD(+) + (ADP-D-ribosyl)n-acceptor = nicotinamide + (ADP-D-ribosyl)n+1-acceptor + H(+).. It catalyses the reaction L-aspartyl-[protein] + NAD(+) = 4-O-(ADP-D-ribosyl)-L-aspartyl-[protein] + nicotinamide. It carries out the reaction L-glutamyl-[protein] + NAD(+) = 5-O-(ADP-D-ribosyl)-L-glutamyl-[protein] + nicotinamide. Its activity is regulated as follows. Inhibited by N-(6-oxo-5,6-dihydrophenanthridin-2-yl)-N,N-dimethylacetamide HCl (PJ34), 1,5-dihydroxyisoquinoline (DHQ) and 3-aminobenzamide (3AB). Its function is as follows. Poly[ADP-ribose] polymerase modifies various nuclear proteins by poly(ADP-ribosyl)ation, a post-translational modification synthesized after DNA damage that appears as an obligatory step in a detection/signaling pathway leading to the reparation of DNA strand breaks and programmed cell death. Involved in protection of the genome against mutations. The chain is Poly [ADP-ribose] polymerase 1 from Caenorhabditis elegans.